We begin with the raw amino-acid sequence, 74 residues long: Consomatin Gh1 (74 aa).

Positions 1-22 (MQTACWVMVMMMVWITAPLSEG) are cleaved as a signal peptide. The propeptide occupies 23 to 57 (GKLNDVIRGLVPDDVTPQLILRSLFFHRPSDSVVR). Residues cysteine 65 and cysteine 70 are joined by a disulfide bond. Tryptophan 67 carries the post-translational modification D-tryptophan. 4-hydroxyproline is present on residues proline 71, proline 72, and proline 74.

The protein belongs to the conotoxin C superfamily. Consomatin family. In terms of tissue distribution, expressed by the venom duct.

The protein resides in the secreted. In terms of biological role, moderately activates human somatostatin receptors (SSTR) with a preferential activation of SSTR1 and SSTR4. In vivo, does not cause behavioral changes in mice within a few minutes of intracranial injection, but causes a progressive loss of movement thereafter. Four to five hours after injection, mice recover, even with the highest dose tested. Shows antinociception and antihyperalgesia activities in two mouse models of acute pain, most probably by acting outside the central nervous system. In Conus grahami (Cone snail), this protein is Consomatin Gh1.